Consider the following 445-residue polypeptide: tRNA-2-methylthio-N(6)-dimethylallyladenosine synthase (445 aa).

The region spanning 3-124 (KKLYIKTYGC…LPELISKVVR (122 aa)) is the MTTase N-terminal domain. Residues Cys12, Cys48, Cys87, Cys162, Cys166, and Cys169 each coordinate [4Fe-4S] cluster. The 233-residue stretch at 148-380 (YTQGASSFIS…QKELATQQLA (233 aa)) folds into the Radical SAM core domain. The TRAM domain maps to 383–445 (ESCVGSTMKV…ALNSLTGEIL (63 aa)).

Belongs to the methylthiotransferase family. MiaB subfamily. Monomer. It depends on [4Fe-4S] cluster as a cofactor.

It localises to the cytoplasm. It carries out the reaction N(6)-dimethylallyladenosine(37) in tRNA + (sulfur carrier)-SH + AH2 + 2 S-adenosyl-L-methionine = 2-methylsulfanyl-N(6)-dimethylallyladenosine(37) in tRNA + (sulfur carrier)-H + 5'-deoxyadenosine + L-methionine + A + S-adenosyl-L-homocysteine + 2 H(+). In terms of biological role, catalyzes the methylthiolation of N6-(dimethylallyl)adenosine (i(6)A), leading to the formation of 2-methylthio-N6-(dimethylallyl)adenosine (ms(2)i(6)A) at position 37 in tRNAs that read codons beginning with uridine. The polypeptide is tRNA-2-methylthio-N(6)-dimethylallyladenosine synthase (Rickettsia typhi (strain ATCC VR-144 / Wilmington)).